We begin with the raw amino-acid sequence, 339 residues long: Trace amine-associated receptor 2 (339 aa).

Topologically, residues 1–36 are extracellular; that stretch reads MASFEAQQETFDCSEYGNGSCPENERSLGVRAAMYS. Asparagine 18 is a glycosylation site (N-linked (GlcNAc...) asparagine). Cystine bridges form between cysteine 21–cysteine 185 and cysteine 104–cysteine 189. The helical transmembrane segment at 37 to 57 threads the bilayer; that stretch reads LMACAIFITIFGNLAMIISIS. The Cytoplasmic portion of the chain corresponds to 58-67; it reads YFKQLHTPTN. The helical transmembrane segment at 68 to 88 threads the bilayer; the sequence is LLILSMAVTDFLLGFTIMPYS. Residues 89 to 106 lie on the Extracellular side of the membrane; that stretch reads MVRSVENCWYFGLTFCKI. The chain crosses the membrane as a helical span at residues 107–127; that stretch reads HYSFDLMLSITSIFHLCSVAV. Over 128-150 the chain is Cytoplasmic; the sequence is DRFYAICHPLHYCTKMTIPVVRR. Residues 151–171 traverse the membrane as a helical segment; that stretch reads LLLVCWSVPGAFAFGVVFSEA. The Extracellular portion of the chain corresponds to 172–195; that stretch reads YADGIEGYDILVACSSSCPVMFNK. A helical transmembrane segment spans residues 196–216; that stretch reads LWGTTLFVAGFFTPSSMMVGI. Topologically, residues 217–251 are cytoplasmic; the sequence is YGKIFAVSKKHARVIDNLPENQNNQMRKDKKAAKT. The chain crosses the membrane as a helical span at residues 252–272; the sequence is LGIVMGVFLLCWFPCFFTILL. The Extracellular segment spans residues 273 to 287; the sequence is DPFLNFSTPAVLFDA. Residue asparagine 277 is glycosylated (N-linked (GlcNAc...) asparagine). The chain crosses the membrane as a helical span at residues 288 to 310; it reads LTWFGYFNSTCNPLIYGFFYPWF. Residues 311–339 are Cytoplasmic-facing; sequence RRALKYILLGKIFSSHFHNTNLFTQKETE.

The protein belongs to the G-protein coupled receptor 1 family. Mainly expressed in neurons of the olfactory epithelium. Also present in the limbic brain areas receiving projection from the olfactory system and several brain regions, including the hippocampus, cerebellum, cortex, raphe nuclei, hypothalamus and habenula.

Its subcellular location is the cell membrane. Functionally, orphan olfactory receptor specific for trace amines. Trace amine compounds are enriched in animal body fluids and act on trace amine-associated receptors (TAARs) to elicit both intraspecific and interspecific innate behaviors. Ligand-binding causes a conformation change that triggers signaling via the G(s)-class of G-proteins which activate adenylate cyclase. May also be required to provide olfactory input into limbic brain areas to regulate emotional behaviors likely via modulation of the dopamine system. This is Trace amine-associated receptor 2 from Mus musculus (Mouse).